A 308-amino-acid polypeptide reads, in one-letter code: Homoserine O-acetyltransferase (308 aa).

The active-site Acyl-thioester intermediate is the Cys142. Residues Lys163 and Ser192 each contribute to the substrate site. Residue His235 is the Proton acceptor of the active site. Glu237 is an active-site residue. Arg249 serves as a coordination point for substrate.

It belongs to the MetA family.

Its subcellular location is the cytoplasm. It carries out the reaction L-homoserine + acetyl-CoA = O-acetyl-L-homoserine + CoA. It functions in the pathway amino-acid biosynthesis; L-methionine biosynthesis via de novo pathway; O-acetyl-L-homoserine from L-homoserine: step 1/1. Its function is as follows. Transfers an acetyl group from acetyl-CoA to L-homoserine, forming acetyl-L-homoserine. The chain is Homoserine O-acetyltransferase from Rhizobium rhizogenes (strain K84 / ATCC BAA-868) (Agrobacterium radiobacter).